Reading from the N-terminus, the 542-residue chain is Glucose-6-phosphate isomerase 2 (542 aa).

Residue Glu353 is the Proton donor of the active site. Active-site residues include His384 and Lys505.

The protein belongs to the GPI family.

The protein localises to the cytoplasm. The catalysed reaction is alpha-D-glucose 6-phosphate = beta-D-fructose 6-phosphate. It participates in carbohydrate biosynthesis; gluconeogenesis. Its pathway is carbohydrate degradation; glycolysis; D-glyceraldehyde 3-phosphate and glycerone phosphate from D-glucose: step 2/4. In terms of biological role, catalyzes the reversible isomerization of glucose-6-phosphate to fructose-6-phosphate. This Cupriavidus pinatubonensis (strain JMP 134 / LMG 1197) (Cupriavidus necator (strain JMP 134)) protein is Glucose-6-phosphate isomerase 2.